The primary structure comprises 561 residues: GPI mannosyltransferase 3 (561 aa).

8 helical membrane passes run 3–25 (LIYV…QTYY), 64–84 (IAGL…LLVV), 110–130 (WALF…RTLA), 155–175 (LWPA…WLPL), 195–215 (FVLI…YWHG), 246–266 (FSVG…FGVM), 275–295 (YPVS…LSAV), and 328–348 (TMLW…AWYL). Residues Asn398 and Asn456 are each glycosylated (N-linked (GlcNAc...) asparagine). The interval 525–546 (ENAFNRGPDSGQHEPDVHDHPP) is disordered. Residues 535–546 (GQHEPDVHDHPP) are compositionally biased toward basic and acidic residues.

Belongs to the glycosyltransferase 22 family. PIGB subfamily.

It localises to the endoplasmic reticulum membrane. It participates in glycolipid biosynthesis; glycosylphosphatidylinositol-anchor biosynthesis. Mannosyltransferase involved in glycosylphosphatidylinositol-anchor biosynthesis. Transfers the third alpha-1,2-mannose to Man2-GlcN-acyl-PI during GPI precursor assembly. The sequence is that of GPI mannosyltransferase 3 from Drosophila melanogaster (Fruit fly).